The sequence spans 147 residues: Cyanate hydratase (147 aa).

Active-site residues include Arg-88, Glu-91, and Ser-114.

It belongs to the cyanase family.

The catalysed reaction is cyanate + hydrogencarbonate + 3 H(+) = NH4(+) + 2 CO2. Functionally, catalyzes the reaction of cyanate with bicarbonate to produce ammonia and carbon dioxide. In Polaromonas sp. (strain JS666 / ATCC BAA-500), this protein is Cyanate hydratase.